A 344-amino-acid chain; its full sequence is Phosphoribosylformylglycinamidine cyclo-ligase (344 aa).

It belongs to the AIR synthase family.

The protein resides in the cytoplasm. It catalyses the reaction 2-formamido-N(1)-(5-O-phospho-beta-D-ribosyl)acetamidine + ATP = 5-amino-1-(5-phospho-beta-D-ribosyl)imidazole + ADP + phosphate + H(+). It functions in the pathway purine metabolism; IMP biosynthesis via de novo pathway; 5-amino-1-(5-phospho-D-ribosyl)imidazole from N(2)-formyl-N(1)-(5-phospho-D-ribosyl)glycinamide: step 2/2. The polypeptide is Phosphoribosylformylglycinamidine cyclo-ligase (Haemophilus influenzae (strain 86-028NP)).